Consider the following 311-residue polypeptide: Glycosyltransferase 6 domain-containing protein 1 (311 aa).

Topologically, residues 1-5 (MKAKG) are cytoplasmic. The chain crosses the membrane as a helical; Signal-anchor for type II membrane protein span at residues 6–26 (RILLLTSCLFLLLLLLAKIHL). The Lumenal segment spans residues 27–311 (RNHQEEELPL…KVAHYPTDDL (285 aa)). A glycan (N-linked (GlcNAc...) asparagine) is linked at asparagine 77. Substrate is bound by residues 85-90 (FAVSSF), 176-178 (SVN), and 198-201 (HAWW). Glutamate 266 functions as the Nucleophile in the catalytic mechanism.

This sequence belongs to the glycosyltransferase 6 family. It depends on Mn(2+) as a cofactor.

Its subcellular location is the membrane. In Rattus norvegicus (Rat), this protein is Glycosyltransferase 6 domain-containing protein 1 (Glt6d1).